The following is a 408-amino-acid chain: Collagen and calcium-binding EGF domain-containing protein 1 (408 aa).

An N-terminal signal peptide occupies residues 1-35; the sequence is MVPPPLPSRGGAAKRQLGKSLGPLLLLLALGHTWT. One can recognise an EGF-like; calcium-binding domain in the interval 135–176; it reads DIDECATSNTTLCAHICINTMGSYHCECREGYILEDDGRTCT. 3 disulfide bridges follow: Cys-139–Cys-151, Cys-147–Cys-160, and Cys-162–Cys-175. Asn-143 carries N-linked (GlcNAc...) asparagine glycosylation. Asn-183 carries an N-linked (GlcNAc...) asparagine glycan. Disordered regions lie at residues 246–335 and 361–408; these read YLPG…GPPG and HRTH…NFYP. Collagen-like domains lie at 247–292 and 302–335; these read LPGP…PMGP and GRRGPVGPPGAPGRHGSKGERGAPGPPGSPGPPG. Over residues 272–281 the composition is skewed to pro residues; the sequence is PGMPGPPGQP. Positions 283 to 294 are enriched in low complexity; it reads PRGSMGPMGPSP. Residues 325-334 show a composition bias toward pro residues; the sequence is PGPPGSPGPP. The O-linked (Xyl...) (chondroitin sulfate) serine glycan is linked to Ser-387. The span at 390-402 shows a compositional bias: basic and acidic residues; it reads DYSRRTEARDPEA.

Belongs to the CCBE1 family.

It localises to the secreted. Its function is as follows. Required for lymphangioblast budding and angiogenic sprouting from venous endothelium during embryogenesis. The polypeptide is Collagen and calcium-binding EGF domain-containing protein 1 (Ccbe1) (Mus musculus (Mouse)).